The primary structure comprises 182 residues: uncharacterized protein (182 aa).

To M.tuberculosis Rv2313c.

This is an uncharacterized protein from Escherichia coli (strain K12).